A 324-amino-acid chain; its full sequence is Ribonucleoside-diphosphate reductase subunit beta nrdF2 (324 aa).

Fe cation contacts are provided by Glu103 and His106. The active site involves Tyr110. Fe cation-binding residues include Glu163, Glu197, and His200.

The protein belongs to the ribonucleoside diphosphate reductase small chain family. Tetramer of two alpha and two beta subunits. It depends on Fe cation as a cofactor.

The catalysed reaction is a 2'-deoxyribonucleoside 5'-diphosphate + [thioredoxin]-disulfide + H2O = a ribonucleoside 5'-diphosphate + [thioredoxin]-dithiol. In terms of biological role, provides the precursors necessary for DNA synthesis. Catalyzes the biosynthesis of deoxyribonucleotides from the corresponding ribonucleotides. The protein is Ribonucleoside-diphosphate reductase subunit beta nrdF2 (nrdF2) of Mycobacterium tuberculosis (strain CDC 1551 / Oshkosh).